A 270-amino-acid polypeptide reads, in one-letter code: tRNA pseudouridine synthase A (270 aa).

Catalysis depends on D54, which acts as the Nucleophile. Residue Y112 participates in substrate binding.

Belongs to the tRNA pseudouridine synthase TruA family. As to quaternary structure, homodimer.

The enzyme catalyses uridine(38/39/40) in tRNA = pseudouridine(38/39/40) in tRNA. Formation of pseudouridine at positions 38, 39 and 40 in the anticodon stem and loop of transfer RNAs. This is tRNA pseudouridine synthase A from Bordetella bronchiseptica (strain ATCC BAA-588 / NCTC 13252 / RB50) (Alcaligenes bronchisepticus).